Here is a 986-residue protein sequence, read N- to C-terminus: Vacuolar membrane protease (986 aa).

The Cytoplasmic portion of the chain corresponds to 1–20; the sequence is MATPRAQKFNPIAFTPGPVT. The helical transmembrane segment at 21-41 threads the bilayer; the sequence is LITTIVYLALLIPILVISLVV. The Vacuolar segment spans residues 42 to 392; the sequence is PPAPETSPEG…AFAVFRLHTL (351 aa). Residues Asn53, Asn116, and Asn119 are each glycosylated (N-linked (GlcNAc...) asparagine). 2 residues coordinate Zn(2+): His175 and Asp187. Glu221 acts as the Proton acceptor in catalysis. Glu222 is a Zn(2+) binding site. The N-linked (GlcNAc...) asparagine glycan is linked to Asn238. Zn(2+) is bound by residues Glu247 and His320. Residues 393 to 413 form a helical membrane-spanning segment; it reads FALSVTLLIVAPLVIFITAIV. Residues 414–447 lie on the Cytoplasmic side of the membrane; it reads LSKTDRMYLFSMSKSLGGTDERVSLRGLRGLFRT. The helical transmembrane segment at 448-468 threads the bilayer; it reads PIILAVATVIPIGLAYLLEKV. Residues 469-477 are Vacuolar-facing; sequence NPYIVHSSQ. Residues 478–498 traverse the membrane as a helical segment; sequence FSVWSMMISVWIFLAWFLACA. Over 499–509 the chain is Cytoplasmic; it reads ADFFRPSALHR. The chain crosses the membrane as a helical span at residues 510–530; sequence AYSYTWIFIATWVMLVINTVY. Over 531–534 the chain is Vacuolar; that stretch reads ANQK. Residues 535 to 555 traverse the membrane as a helical segment; sequence GIAAGYFVFFYFSGSFLATWV. Over 556–665 the chain is Cytoplasmic; sequence SYLELFALPR…WSWTLPRWTW (110 aa). Residues 595-620 form a disordered region; the sequence is ELPSDTGPHAEYPGDADETDPTESTS. Residues 666-686 form a helical membrane-spanning segment; the sequence is VLQLLLLAPIVLILVGQLALF. Over 687-702 the chain is Vacuolar; that stretch reads LTTSMSQVGSDGVSTF. The helical transmembrane segment at 703 to 723 threads the bilayer; the sequence is IVYLACAVFTTLLFAPLFPFI. The Cytoplasmic segment spans residues 724 to 729; that stretch reads HRFTYH. A helical membrane pass occupies residues 730-750; sequence IPTFLFLVFVGTLIYNLVAFP. At 751 to 986 the chain is on the vacuolar side; sequence FSPANRLKMF…VEASHGITIQ (236 aa). Asn797, Asn840, and Asn948 each carry an N-linked (GlcNAc...) asparagine glycan.

Belongs to the peptidase M28 family. The cofactor is Zn(2+).

It localises to the vacuole membrane. May be involved in vacuolar sorting and osmoregulation. This chain is Vacuolar membrane protease, found in Blastomyces gilchristii (strain SLH14081) (Blastomyces dermatitidis).